We begin with the raw amino-acid sequence, 384 residues long: Galactokinase (384 aa).

35–38 (EHTD) provides a ligand contact to substrate. Residues S69 and 125–131 (GAGLSSS) contribute to the ATP site. Positions 131 and 163 each coordinate Mg(2+). The active-site Proton acceptor is D175. Y224 serves as a coordination point for substrate.

It belongs to the GHMP kinase family. GalK subfamily.

It localises to the cytoplasm. It catalyses the reaction alpha-D-galactose + ATP = alpha-D-galactose 1-phosphate + ADP + H(+). It functions in the pathway carbohydrate metabolism; galactose metabolism. Catalyzes the transfer of the gamma-phosphate of ATP to D-galactose to form alpha-D-galactose-1-phosphate (Gal-1-P). The sequence is that of Galactokinase from Aliivibrio fischeri (strain ATCC 700601 / ES114) (Vibrio fischeri).